We begin with the raw amino-acid sequence, 72 residues long: SRY-related protein ADW2 (72 aa).

Residues Val1–Lys69 constitute a DNA-binding region (HMG box).

It is found in the nucleus. In Alligator mississippiensis (American alligator), this protein is SRY-related protein ADW2.